The chain runs to 394 residues: tRNA-specific 2-thiouridylase MnmA (394 aa).

ATP contacts are provided by residues 13–20 and Met-39; that span reads GLSGGVDS. The tract at residues 99-101 is interaction with target base in tRNA; that stretch reads NPD. Residue Cys-104 is the Nucleophile of the active site. Cysteines 104 and 202 form a disulfide. Gly-128 contacts ATP. The tract at residues 152-154 is interaction with tRNA; the sequence is KDQ. Residue Cys-202 is the Cysteine persulfide intermediate of the active site. The interval 329–330 is interaction with tRNA; that stretch reads RY.

This sequence belongs to the MnmA/TRMU family.

It localises to the cytoplasm. It catalyses the reaction S-sulfanyl-L-cysteinyl-[protein] + uridine(34) in tRNA + AH2 + ATP = 2-thiouridine(34) in tRNA + L-cysteinyl-[protein] + A + AMP + diphosphate + H(+). Its function is as follows. Catalyzes the 2-thiolation of uridine at the wobble position (U34) of tRNA, leading to the formation of s(2)U34. This chain is tRNA-specific 2-thiouridylase MnmA, found in Polaromonas naphthalenivorans (strain CJ2).